A 448-amino-acid chain; its full sequence is 4-hydroxybenzoate transporter PcaK (448 aa).

At 1-30 (MNSPSLPAVERLDVQAFINAQPLSPYQWRI) the chain is on the cytoplasmic side. A helical membrane pass occupies residues 31–51 (VLLCFLIVFLDGLDTAAMGFI). At 52 to 67 (APALTQDWGIDRASLG) the chain is on the periplasmic side. A helical transmembrane segment spans residues 68–88 (PVMSAALIGMVFGALGSGPLA). The Cytoplasmic segment spans residues 89-94 (DRYGRK). The helical transmembrane segment at 95–115 (LVLVAAVFLFGLFSLASAYST) threads the bilayer. The Periplasmic segment spans residues 116–119 (NVEQ). The chain crosses the membrane as a helical span at residues 120-140 (LLALRFLTGLGLGAAMPNATT). Topologically, residues 141-152 (LLSEYTPERLKS) are cytoplasmic. The helical transmembrane segment at 153 to 173 (LLVTSMFCGFNLGMACGGFVS) threads the bilayer. Residues 174-184 (AKLIPLFGWHS) lie on the Periplasmic side of the membrane. A helical transmembrane segment spans residues 185–205 (LLLLGGLLPLVLAVVLLFRLP). The Cytoplasmic segment spans residues 206 to 261 (ESARYLVVRNRGSERVRQVLAPIAPAQVALARSFHVPEQQTVQARNVFAVIFSGTY). Residues 262 to 282 (SAGTLLLWLTYFMGLVIVYLL) form a helical membrane-spanning segment. At 283–301 (TSWLPTLMRDSGASLEQAA) the chain is on the periplasmic side. The helical transmembrane segment at 302–322 (FIGALFQFGGVLSAVAVGWAM) threads the bilayer. The Cytoplasmic portion of the chain corresponds to 323 to 329 (DRFNPHK). A helical transmembrane segment spans residues 330–350 (VIGLFYLLAGVFAWCVGQSLG). Residue glutamine 351 is a topological domain, periplasmic. The chain crosses the membrane as a helical span at residues 352 to 372 (VTLLATLVLLAGMCINGAQSA). Residues 373–398 (MPSLAARFYPTQGRATGVSWMLGIGR) are Cytoplasmic-facing. A helical transmembrane segment spans residues 399–419 (FGAILGAWIGATLLGLGWNFE). At 420 to 421 (QV) the chain is on the periplasmic side. The helical transmembrane segment at 422 to 442 (LTALVLPAALATAAVLLKGLV) threads the bilayer. The Cytoplasmic portion of the chain corresponds to 443–448 (SHADAG).

The protein belongs to the major facilitator superfamily. Aromatic acid:H(+) symporter (AAHS) (TC 2.A.1.15) family.

It is found in the cell inner membrane. In terms of biological role, transports 4-hydroxybenzoate (4-HBA) and protocatechuate across the membrane. Driven by the proton motive force. Also functions as a chemoreceptor, which is required for chemotaxis to aromatic acids. The chain is 4-hydroxybenzoate transporter PcaK (pcaK) from Pseudomonas aeruginosa (strain ATCC 15692 / DSM 22644 / CIP 104116 / JCM 14847 / LMG 12228 / 1C / PRS 101 / PAO1).